Here is a 213-residue protein sequence, read N- to C-terminus: High frequency lysogenization protein HflD homolog (213 aa).

A coiled-coil region spans residues 79-126; the sequence is QGLNAELTRYTLSLMVLERKLSSAKGALDTLGNRINGLQRQLEHFDLQ.

Belongs to the HflD family.

Its subcellular location is the cytoplasm. It localises to the cell inner membrane. This chain is High frequency lysogenization protein HflD homolog, found in Shigella dysenteriae serotype 1 (strain Sd197).